Here is a 400-residue protein sequence, read N- to C-terminus: 1-deoxy-D-xylulose 5-phosphate reductoisomerase (400 aa).

7 residues coordinate NADPH: threonine 10, glycine 11, serine 12, isoleucine 13, glycine 36, asparagine 38, and asparagine 124. Lysine 125 serves as a coordination point for 1-deoxy-D-xylulose 5-phosphate. Glutamate 126 serves as a coordination point for NADPH. Aspartate 150 contributes to the Mn(2+) binding site. Positions 151, 152, 186, and 209 each coordinate 1-deoxy-D-xylulose 5-phosphate. Glutamate 152 is a Mn(2+) binding site. Residue glycine 215 participates in NADPH binding. Serine 222, asparagine 227, lysine 228, and glutamate 231 together coordinate 1-deoxy-D-xylulose 5-phosphate. Glutamate 231 is a Mn(2+) binding site.

The protein belongs to the DXR family. Mg(2+) serves as cofactor. Requires Mn(2+) as cofactor.

It catalyses the reaction 2-C-methyl-D-erythritol 4-phosphate + NADP(+) = 1-deoxy-D-xylulose 5-phosphate + NADPH + H(+). The protein operates within isoprenoid biosynthesis; isopentenyl diphosphate biosynthesis via DXP pathway; isopentenyl diphosphate from 1-deoxy-D-xylulose 5-phosphate: step 1/6. Its function is as follows. Catalyzes the NADPH-dependent rearrangement and reduction of 1-deoxy-D-xylulose-5-phosphate (DXP) to 2-C-methyl-D-erythritol 4-phosphate (MEP). In Aliivibrio fischeri (strain ATCC 700601 / ES114) (Vibrio fischeri), this protein is 1-deoxy-D-xylulose 5-phosphate reductoisomerase.